The following is a 276-amino-acid chain: MSLCEDMLLCNYRKCRIKLSGYAWVTACSHIFCDQHGSGEFSRSPAICPACNSTLSGKLDIVRTELSPSEEYKAMVLAGLRPEVVLDISSRALAFWTYQVHQERLYQEYNFSKAENHLKQMEKMYMQQIQSKNIELTSMKGEVISMKKVLEEYKKKFSDISEKLMERNRQYQKLQGLYDSLRLRNITIASQEGSLEPGMIPQSGVFGFPPGNNSKFSLDHIPVGNQGGGDEDVQFRPFFVCSPTAPEPINNFFSFASPSHEAEQQVCSRAFKAKRI.

The RING-type; atypical zinc-finger motif lies at 10-52 (CNYRKCRIKLSGYAWVTACSHIFCDQHGSGEFSRSPAICPACN). Positions 146–182 (MKKVLEEYKKKFSDISEKLMERNRQYQKLQGLYDSLR) form a coiled coil.

Interacts with CCNB1, UBE2L3 and NF2. In terms of processing, ubiquitinated; autoubiquitinated. Phosphorylated by CDK1 on serine or threonine residues (in vitro). Expressed predominantly in the testes and 17 day embryos (corresponding to prophase I in females). Weakly or not expressed in other tissues.

It localises to the nucleus. The protein resides in the chromosome. The catalysed reaction is S-ubiquitinyl-[E2 ubiquitin-conjugating enzyme]-L-cysteine + [acceptor protein]-L-lysine = [E2 ubiquitin-conjugating enzyme]-L-cysteine + N(6)-ubiquitinyl-[acceptor protein]-L-lysine.. The protein operates within protein modification; protein ubiquitination. Functionally, ubiquitin E3 ligase that acts as a limiting factor for crossing-over during meiosis: required during zygonema to limit the colocalization of RNF212 with MutS-gamma-associated recombination sites and thereby establish early differentiation of crossover and non-crossover sites. Later, it is directed by MutL-gamma to stably accumulate at designated crossover sites. Probably promotes the dissociation of RNF212 and MutS-gamma to allow the progression of recombination and the implementation of the final steps of crossing over. Modulates cyclin-B levels and participates in the regulation of cell cycle progression through the G2 phase. Overexpression causes delayed entry into mitosis. The chain is E3 ubiquitin-protein ligase CCNB1IP1 (Ccnb1ip1) from Mus musculus (Mouse).